The primary structure comprises 307 residues: Potassium channel subfamily K member 7 (307 aa).

Topologically, residues 1-10 (MGGLRPWSRY) are cytoplasmic. A helical transmembrane segment spans residues 11–31 (GLLVVAHLLALGLGAVVFQAL). An N-linked (GlcNAc...) asparagine glycan is attached at N83. Positions 92-119 (LPSALLFAASILTTTGYGHMAPLSPGGK) form an intramembrane region, pore-forming. A helical membrane pass occupies residues 120–140 (AFCMVYAALGLPASLALVATL). The Cytoplasmic segment spans residues 141–170 (RHCLLPVLSRPRAWVAVHWQLSPARAALLQ). A helical membrane pass occupies residues 171–191 (AVALGLLVASSFVLLPALVLW). The pore-forming intramembrane region spans 199 to 227 (LLGAVYFCFSSLSTIGLEDLLPGRGRSLH). The chain crosses the membrane as a helical span at residues 233–253 (LGQLALLGYLLLGLLAMLLAV). Residues 254 to 307 (ETFSELPQVRAMGKFFRPSGPVTAEDQGGILGQDELALSTLPPAAPASGQAPAC) lie on the Cytoplasmic side of the membrane.

It belongs to the two pore domain potassium channel (TC 1.A.1.8) family. In terms of assembly, homodimer.

The protein localises to the membrane. Its function is as follows. Probable potassium channel subunit. No channel activity observed in vitro as protein remains in the endoplasmic reticulum. May need to associate with an as yet unknown partner in order to reach the plasma membrane. The chain is Potassium channel subfamily K member 7 (KCNK7) from Homo sapiens (Human).